The following is a 193-amino-acid chain: MATPKSFRDNLAEILKTHDFRTVELEFRLGFQAPGEFITNINKHVWTTAKEKLGTPAQELVMVDKYIRSTPGESSRYVVFPDGQGYWEHKKKVAKETTTGGKYGVRSAFSLERRENGKPPVSFRMQRTKYRTTFVKGPWKIDFTRVESIPATDRDCESTYEIEVELYDMFYLFEKELDIIIQEGNKLVQSIVM.

Mn(2+) is required as a cofactor.

The catalysed reaction is a 5'-end triphospho-ribonucleoside in mRNA + H2O = a 5'-end diphospho-ribonucleoside in mRNA + phosphate + H(+). Its function is as follows. Catalyzes the first stes of cap formation: by removing the gamma-phosphate from the 5'-triphosphate end of nascent mRNA to yield a diphosphate end. The chain is 5'RNA triphosphatase A449R (A449R) from Chlorella (PBCV-1).